The chain runs to 1030 residues: ADAMTS-like protein 4 (1030 aa).

The N-terminal stretch at 1–24 (MELWLGRLWLYVMLLLLLLQLCQD) is a signal peptide. Residues 47-91 (GPWGRWASCSQPCGVGVQRRSRTCELHPALSLPPRPPRHPEAPQP) form the TSP type-1 1 domain. Disordered regions lie at residues 73–150 (HPAL…KPGM) and 168–306 (LAHK…LPLT). Polar residues-rich tracts occupy residues 176–186 (KDSSTAEETLP), 211–237 (QSRS…SSAP), and 245–257 (PTSS…SFQG). N-linked (GlcNAc...) asparagine glycosylation is found at Asn451 and Asn731. TSP type-1 domains follow at residues 681–740 (CPPY…QLRL), 741–800 (CGHW…GPCT), 803–865 (WFYS…GPCE), 866–925 (KTWR…QGQA), and 926–982 (CEDQ…QPCN). The PLAC domain occupies 985 to 1022 (PDDQCKDSSPHCPLVVQARLCVYPYYTATCCRSCAHVL).

As to quaternary structure, interacts with CTSB. Interacts with FBN1. Glycosylated. Can be O-fucosylated by POFUT2 on a serine or a threonine residue found within the consensus sequence C1-X(2)-(S/T)-C2-G of the TSP type-1 repeat domains where C1 and C2 are the first and second cysteine residue of the repeat, respectively. Fucosylated repeats can then be further glycosylated by the addition of a beta-1,3-glucose residue by the glucosyltransferase, B3GALTL. Fucosylation mediates the efficient secretion of ADAMTS family members. Can also be C-glycosylated with one or two mannose molecules on tryptophan residues within the consensus sequence W-X-X-W of the TPRs, and N-glycosylated. These other glycosylations can also facilitate secretion.

Its subcellular location is the secreted. It is found in the extracellular space. It localises to the extracellular matrix. Its function is as follows. Positive regulation of apoptosis. May facilitate FBN1 microfibril biogenesis. This Rattus norvegicus (Rat) protein is ADAMTS-like protein 4.